Here is a 263-residue protein sequence, read N- to C-terminus: HTH-type transcriptional repressor NanR (263 aa).

The 69-residue stretch at 30-98 folds into the HTH gntR-type domain; it reads KKLSEMVEEE…NGERARVSRP (69 aa). Residues 58 to 77 constitute a DNA-binding region (H-T-H motif); the sequence is ERELMAFFNVGRPSVREALA.

It belongs to the NanR family.

Its function is as follows. Transcriptional repressor that controls expression of the genes required for the catabolism of sialic acids. This Salmonella bongori (strain ATCC 43975 / DSM 13772 / NCTC 12419) protein is HTH-type transcriptional repressor NanR.